A 245-amino-acid polypeptide reads, in one-letter code: Ribosomal RNA large subunit methyltransferase E (245 aa).

Residues 1 to 26 form a disordered region; the sequence is MTKPPVGSNRSGRKLGQKVKKGKLKA. Residues 11 to 26 are compositionally biased toward basic residues; that stretch reads SGRKLGQKVKKGKLKA. S-adenosyl-L-methionine contacts are provided by glycine 81, tryptophan 83, aspartate 104, aspartate 120, and aspartate 144. Catalysis depends on lysine 184, which acts as the Proton acceptor.

Belongs to the class I-like SAM-binding methyltransferase superfamily. RNA methyltransferase RlmE family.

It is found in the cytoplasm. The enzyme catalyses uridine(2552) in 23S rRNA + S-adenosyl-L-methionine = 2'-O-methyluridine(2552) in 23S rRNA + S-adenosyl-L-homocysteine + H(+). Its function is as follows. Specifically methylates the uridine in position 2552 of 23S rRNA at the 2'-O position of the ribose in the fully assembled 50S ribosomal subunit. This is Ribosomal RNA large subunit methyltransferase E from Sinorhizobium medicae (strain WSM419) (Ensifer medicae).